A 658-amino-acid polypeptide reads, in one-letter code: Probable CoA ligase CCL6 (658 aa).

ATP is bound by residues Thr-226 to Lys-234, Gln-411 to Thr-416, Asp-497, Ile-509 to Arg-512, and Lys-632. Residues Asp-298–Gln-411 form an SBD1 region. An SBD2 region spans residues Gly-412 to Tyr-477.

Belongs to the ATP-dependent AMP-binding enzyme family. In terms of tissue distribution, mostly expressed in glandular trichomes (lupulin glands) after flowering, and, to a lower extent, in stems, leaves, cones and flowers.

The protein resides in the cytoplasm. It localises to the cytosol. In Humulus lupulus (European hop), this protein is Probable CoA ligase CCL6.